The primary structure comprises 584 residues: Outer membrane transporter CdiB-2 (584 aa).

The signal sequence occupies residues 1–20 (MATRFAILPVTALITLTAQA). Residues 24-44 (PTPNDQAAAARANAEQNQQAQ) show a composition bias toward low complexity. The segment at 24–72 (PTPNDQAAAARANAEQNQQAQQRRDAQQRDATVQAPGVRSDVPRPEAYP) is disordered. The POTRA domain maps to 98-171 (SKAQGASALP…GALKLALIPG (74 aa)).

The protein belongs to the TPS (TC 1.B.20) family.

It localises to the cell outer membrane. Potential outer membrane protein component of a toxin-immunity protein module, which functions as a cellular contact-dependent growth inhibition (CDI) system. CDI modules allow bacteria to communicate with and inhibit the growth of closely related neighboring bacteria in a contact-dependent fashion. This protein may be required for secretion and assembly of the CdiA toxin protein. Functionally, expression of this cdiAIB locus in B.thailandensis confers protection against other bacteria carrying the locus; growth inhibition requires cellular contact. In terms of biological role, probable member of a two partner secretion pathway (TPS) in which it mediates the secretion of CdiA2. The polypeptide is Outer membrane transporter CdiB-2 (cdiB2) (Burkholderia pseudomallei (strain 1026b)).